A 312-amino-acid polypeptide reads, in one-letter code: Malate dehydrogenase (312 aa).

Residues 7-13 (GAAGGIG) and aspartate 34 each bind NAD(+). Positions 81 and 87 each coordinate substrate. Residues asparagine 94 and 117 to 119 (ITN) each bind NAD(+). Residues asparagine 119 and arginine 153 each contribute to the substrate site. Histidine 177 acts as the Proton acceptor in catalysis. Methionine 227 serves as a coordination point for NAD(+).

It belongs to the LDH/MDH superfamily. MDH type 1 family. As to quaternary structure, homodimer.

The enzyme catalyses (S)-malate + NAD(+) = oxaloacetate + NADH + H(+). Its function is as follows. Catalyzes the reversible oxidation of malate to oxaloacetate. This chain is Malate dehydrogenase, found in Citrobacter koseri (strain ATCC BAA-895 / CDC 4225-83 / SGSC4696).